The following is a 137-amino-acid chain: Small ribosomal subunit protein uS12 (137 aa).

The interval 1 to 23 is disordered; the sequence is MPTINQLVRKPRKSNATKSKSPA. Position 102 is a 3-methylthioaspartic acid (Asp-102).

It belongs to the universal ribosomal protein uS12 family. As to quaternary structure, part of the 30S ribosomal subunit. Contacts proteins S8 and S17. May interact with IF1 in the 30S initiation complex.

With S4 and S5 plays an important role in translational accuracy. Functionally, interacts with and stabilizes bases of the 16S rRNA that are involved in tRNA selection in the A site and with the mRNA backbone. Located at the interface of the 30S and 50S subunits, it traverses the body of the 30S subunit contacting proteins on the other side and probably holding the rRNA structure together. The combined cluster of proteins S8, S12 and S17 appears to hold together the shoulder and platform of the 30S subunit. This is Small ribosomal subunit protein uS12 from Leuconostoc citreum (strain KM20).